The chain runs to 1522 residues: Histone-lysine N-methyltransferase EZH2 (1522 aa).

The tract at residues 1–196 (MSPARGDANA…PKTPTPKNTE (196 aa)) is disordered. Residues 39–61 (NRENLRDRDRADKLEKLEKDAHA) show a composition bias toward basic and acidic residues. 2 stretches are compositionally biased toward low complexity: residues 64–76 (QTQT…PVTV) and 103–130 (RGST…SPSL). Positions 141–162 (ILASRTSRFSNRTGIRDSQSPS) are enriched in polar residues. The segment covering 180-195 (ATSNTPAPKTPTPKNT) has biased composition (low complexity). An SBD domain region spans residues 190–220 (PTPKNTEWTVDKIASALSVLAEEVPQNHSRL). The tract at residues 221 to 250 (VNFLLEETEKRAPQPRHLSKTDPFAHMKSK) is EBD domain. The interval 251 to 300 (AIDANRPRPEGVPTMDVKFKQHSGEYGKSRNSGRRFQYPVVCIKPDREPV) is BAM domain. Positions 301–320 (PPYRFHHAEIRKNILALNSQ) are SAL domain. The interval 321–360 (LNFVPHLRDVDPNSAEEQKYSAWLMDLENLDSKSGFKIQP) is SRM domain. The interval 361 to 480 (RSQKIAKRAQ…PIFDNKRAKD (120 aa)) is SANT1L domain. Positions 406–426 (PESDDSMTPQQKSNLLDTYSD) are disordered. Over residues 411–422 (SMTPQQKSNLLD) the composition is skewed to polar residues. Positions 481–560 (APGSQKPPDE…EQRQKTEGGS (80 aa)) are MCSS domain. Residues Cys-508, Cys-511, Cys-516, His-518, Cys-570, Cys-574, Cys-615, Cys-625, Cys-685, His-687, Cys-691, Cys-697, Cys-699, Cys-709, Cys-713, Cys-715, Cys-720, Cys-727, Cys-729, Cys-736, Cys-746, Cys-748, Cys-755, Cys-760, Cys-763, and Cys-784 each coordinate Zn(2+). The segment at 561–650 (ANAPPAHPPC…PVEPRTIPKQ (90 aa)) is SANT2L domain. A CXC domain is found at 658–780 (RRKKQLMSDW…PENAYDEVLH (123 aa)). Residues 795–919 (KAVVLGKSQL…AGEELFFNYG (125 aa)) enclose the SET domain. Tyr-809, Lys-852, Ser-854, and Tyr-855 together coordinate S-adenosyl-L-homocysteine. Residues Tyr-809, Lys-852, Ser-854, Tyr-855, Asn-880, His-881, and Thr-926 each coordinate S-adenosyl-L-methionine. Residue His-881 coordinates S-adenosyl-L-homocysteine. Lys-927 contributes to the S-adenosyl-L-homocysteine binding site. Positions 933–1522 (NEQSGAETTP…KPARYRDEGE (590 aa)) are disordered. Residues 935–946 (QSGAETTPQQPK) show a composition bias toward polar residues. Residues 971–988 (GFDDDDRDGNDSDPDDLW) show a composition bias toward acidic residues. A compositionally biased stretch (low complexity) spans 992-1024 (QQQQQQQQQQQQQQQQQQQQQQQQQQQQQQQQQ). Polar residues predominate over residues 1025 to 1038 (AQKPQPSTSHQPQS). Over residues 1053–1066 (SPDKQLRRENHDAQ) the composition is skewed to basic and acidic residues. Residues 1072-1091 (QFQQQEQQQQQQQQQQQQQQ) show a composition bias toward low complexity. Over residues 1127–1136 (DSSSGGSANE) the composition is skewed to polar residues. The segment covering 1142 to 1162 (KPSRRGGARPGAGRKPKHRPP) has biased composition (basic residues). 2 stretches are compositionally biased toward basic and acidic residues: residues 1207 to 1221 (SDSK…TDKE) and 1228 to 1238 (VNEKDREKGRD). Residues 1255–1299 (KSAPSPAKKQASSPTKISDSNRTTSKNTSSNNNNNTNNNNNNNNN) show a composition bias toward low complexity. The span at 1316 to 1330 (HLTNSQPAALSPSAT) shows a compositional bias: polar residues. Composition is skewed to low complexity over residues 1355-1385 (STMT…SSSS) and 1415-1428 (SSSL…SVFS). A compositionally biased stretch (polar residues) spans 1455-1464 (SGLNSTSLSQ). Residues 1465 to 1494 (ERGEKHEKHEKEKPKEKKGEKERERERDRS) show a composition bias toward basic and acidic residues.

It belongs to the class V-like SAM-binding methyltransferase superfamily. Histone-lysine methyltransferase family. EZ subfamily. As to quaternary structure, component of the polycomb repressive complex 2 (PRC2) that consists of four core subunits icluding EZH2, EED, SUZ12, and RBBP4, among which EZH2 is the catalytic subunit and which minimally requires EED and SUZ12 for catalysis.

It is found in the nucleus. The enzyme catalyses L-lysyl(27)-[histone H3] + 3 S-adenosyl-L-methionine = N(6),N(6),N(6)-trimethyl-L-lysyl(27)-[histone H3] + 3 S-adenosyl-L-homocysteine + 3 H(+). The end product of PRC2 catalysis, H3K27me3, interacts with EED to stimulate the enzymatic activity of PRC2 allosterically. The enzymatic activity of PRC2 is regulated in a very complex manner and PCR2 can adopt different stages including the autoinhibited (A); SAM-bound autoinhibited (A'), basal (B), and H3K27me3-stimulated (S) stages. Actictivity is inhibited by pyridone inhibitors such as GSK126. Functionally, catalytic subunit of the of the Polycomb Repressive Complex 2 (PRC2), a histone H3 lysine methyltransferase responsible for generating mono-, di-, and tri-methylation on Lys27 (H3K27me1, H3K27me2 and H3K27me3). The tri-methylated form is known to be critical in gene repression, and its proper placement is essential in defining repression patterns during development. The PRC2 complex interacts with thousands of RNA species in vivo, but the physiological function of RNA binding has still to be determined. The chain is Histone-lysine N-methyltransferase EZH2 from Chaetomium thermophilum (strain DSM 1495 / CBS 144.50 / IMI 039719) (Thermochaetoides thermophila).